A 586-amino-acid chain; its full sequence is Serine/threonine-protein kinase TDA1 (586 aa).

The segment at 1–26 is disordered; that stretch reads MTTASSSASQLQQRLPEEKPWPQLSG. Residues 39 to 351 enclose the Protein kinase domain; the sequence is VTNHNSLGDG…AKNLKQHPFI (313 aa). ATP contacts are provided by residues 45-53 and Lys68; that span reads LGDGNFSVV. Asp180 acts as the Proton acceptor in catalysis. The segment at 503–524 is disordered; sequence TTPESRSNFNTPKTLSRQGSST. A Phosphothreonine modification is found at Thr504. 2 positions are modified to phosphoserine: Ser509 and Ser518. Thr538 bears the Phosphothreonine mark. Ser578 is subject to Phosphoserine.

The protein belongs to the protein kinase superfamily. Ser/Thr protein kinase family. Interacts with RIM11.

The protein resides in the cytoplasm. It localises to the nucleus. It catalyses the reaction L-seryl-[protein] + ATP = O-phospho-L-seryl-[protein] + ADP + H(+). The catalysed reaction is L-threonyl-[protein] + ATP = O-phospho-L-threonyl-[protein] + ADP + H(+). Functionally, serine/threonine protein kinase shown to have protein phosphorylation activity in vitro. In Saccharomyces cerevisiae (strain ATCC 204508 / S288c) (Baker's yeast), this protein is Serine/threonine-protein kinase TDA1 (TDA1).